A 334-amino-acid polypeptide reads, in one-letter code: Porphobilinogen deaminase (334 aa).

C255 carries the S-(dipyrrolylmethanemethyl)cysteine modification.

It belongs to the HMBS family. Monomer. Dipyrromethane serves as cofactor.

It carries out the reaction 4 porphobilinogen + H2O = hydroxymethylbilane + 4 NH4(+). The protein operates within porphyrin-containing compound metabolism; protoporphyrin-IX biosynthesis; coproporphyrinogen-III from 5-aminolevulinate: step 2/4. In terms of biological role, tetrapolymerization of the monopyrrole PBG into the hydroxymethylbilane pre-uroporphyrinogen in several discrete steps. The chain is Porphobilinogen deaminase from Burkholderia orbicola (strain MC0-3).